Reading from the N-terminus, the 549-residue chain is Fumarate hydratase 1, mitochondrial (549 aa).

C114 contributes to the [4Fe-4S] cluster binding site. (S)-malate is bound by residues 115–116, R154, G197, and 200–206; these read QD and NKSFLLQ. [4Fe-4S] cluster is bound by residues C233 and C328. Residues R404, 450–454, and K474 each bind (S)-malate; that span reads TTAGR.

It belongs to the class-I fumarase family. In terms of assembly, homodimer. The cofactor is [4Fe-4S] cluster.

The protein localises to the mitochondrion. It catalyses the reaction (S)-malate = fumarate + H2O. It participates in carbohydrate metabolism; tricarboxylic acid cycle; (S)-malate from fumarate: step 1/1. Specifically and competitively inhibited by 2-thiomalate, which coordinates with the catalytic [4Fe-4S] cluster. In terms of biological role, catalyzes the reversible hydration of fumarate to (S)-malate. Catalyzes the hydration of fumarate to L-malate in the tricarboxylic acid (TCA) cycle to facilitate a transition step in the production of energy in the form of NADH. This Leishmania major protein is Fumarate hydratase 1, mitochondrial.